The following is a 319-amino-acid chain: ATP-dependent 6-phosphofructokinase (319 aa).

Gly-11 provides a ligand contact to ATP. 21 to 25 (RAVVR) is an ADP binding site. ATP contacts are provided by residues 72-73 (RC) and 102-105 (GDGS). Asp-103 provides a ligand contact to Mg(2+). Substrate is bound at residue 125–127 (TID). Residue Asp-127 is the Proton acceptor of the active site. Arg-154 provides a ligand contact to ADP. Substrate contacts are provided by residues Arg-162 and 169 to 171 (MGR). Residues 185–187 (GAE), Arg-211, and 213–215 (KKH) contribute to the ADP site. Residues Glu-222, Arg-243, and 249–252 (HIQR) contribute to the substrate site.

This sequence belongs to the phosphofructokinase type A (PFKA) family. ATP-dependent PFK group I subfamily. Prokaryotic clade 'B1' sub-subfamily. As to quaternary structure, homotetramer. It depends on Mg(2+) as a cofactor.

The protein resides in the cytoplasm. It catalyses the reaction beta-D-fructose 6-phosphate + ATP = beta-D-fructose 1,6-bisphosphate + ADP + H(+). It participates in carbohydrate degradation; glycolysis; D-glyceraldehyde 3-phosphate and glycerone phosphate from D-glucose: step 3/4. With respect to regulation, allosterically activated by ADP and other diphosphonucleosides, and allosterically inhibited by phosphoenolpyruvate. Its function is as follows. Catalyzes the phosphorylation of D-fructose 6-phosphate to fructose 1,6-bisphosphate by ATP, the first committing step of glycolysis. The polypeptide is ATP-dependent 6-phosphofructokinase (Bacillus licheniformis (strain ATCC 14580 / DSM 13 / JCM 2505 / CCUG 7422 / NBRC 12200 / NCIMB 9375 / NCTC 10341 / NRRL NRS-1264 / Gibson 46)).